The chain runs to 438 residues: Putative permease HI_0125 (438 aa).

Helical transmembrane passes span 21–41 (IIAGLTTFLAMVYSVIVVPNM), 51–71 (SVFIATCLVAGLGSILIGLWA), 73–93 (APMAIGCAISLTAFTAFSLVI), 97–117 (VAIPVALGAVFLMGVVFTLIS), 137–157 (AGIGIGLFLLLIAANGVGLVV), 167–187 (LGDFTSFPVMMSLIGLALIIG), 195–215 (GGILWVIIAITIVGLIFDPNV), 238–258 (FMGALQPAILPVVFALVMTAV), 296–316 (LFSGLFGTAPAAVYIESAAGT), 326–346 (AIVVGVLFLLMLFFQPLAFLV), 347–367 (PGYATAPALMYVGLLMLSNVS), 386–406 (FIVLTANIVTGIMLGFAALVI), and 418–438 (NVGTVIIAIVLVAFYAGGWAI). 315-322 (GTAAGGKT) is an ATP binding site.

It belongs to the nucleobase:cation symporter-2 (NCS2) (TC 2.A.40) family. Azg-like subfamily.

The protein resides in the cell membrane. This chain is Putative permease HI_0125, found in Haemophilus influenzae (strain ATCC 51907 / DSM 11121 / KW20 / Rd).